The primary structure comprises 309 residues: Protein-L-isoaspartate O-methyltransferase (309 aa).

Residues 1–46 are disordered; it reads MSGERAKRFPLALEDLKRAPRKSDGRAGERHAAIAAPKAADKPAAV. Residues 14 to 32 show a composition bias toward basic and acidic residues; sequence EDLKRAPRKSDGRAGERHA. The segment covering 33-46 has biased composition (low complexity); it reads AIAAPKAADKPAAV. Ser156 is an active-site residue.

This sequence belongs to the methyltransferase superfamily. L-isoaspartyl/D-aspartyl protein methyltransferase family.

Its subcellular location is the cytoplasm. It carries out the reaction [protein]-L-isoaspartate + S-adenosyl-L-methionine = [protein]-L-isoaspartate alpha-methyl ester + S-adenosyl-L-homocysteine. Catalyzes the methyl esterification of L-isoaspartyl residues in peptides and proteins that result from spontaneous decomposition of normal L-aspartyl and L-asparaginyl residues. It plays a role in the repair and/or degradation of damaged proteins. This chain is Protein-L-isoaspartate O-methyltransferase, found in Burkholderia vietnamiensis (strain G4 / LMG 22486) (Burkholderia cepacia (strain R1808)).